Consider the following 391-residue polypeptide: Nuclear hormone receptor family member nhr-115 (391 aa).

Positions 5 to 77 (LFPCQICGQN…IGMDASKFQY (73 aa)) form a DNA-binding region, nuclear receptor. Residues 8-28 (CQICGQNSHGTHFGIVSCRAC) form an NR C4-type zinc finger. Residues 41–65 (ARKGCLTNFKDKGSCFCKPCRLRKC) form an NR C4-type; atypical zinc finger. The NR LBD domain occupies 130 to 388 (YLDHGCETPI…FSHPEMFDDS (259 aa)).

Belongs to the nuclear hormone receptor family.

The protein resides in the nucleus. Orphan nuclear receptor. This Caenorhabditis elegans protein is Nuclear hormone receptor family member nhr-115 (nhr-115).